A 753-amino-acid polypeptide reads, in one-letter code: 5-methyltetrahydropteroyltriglutamate--homocysteine methyltransferase (753 aa).

5-methyltetrahydropteroyltri-L-glutamate is bound by residues 17–20 (RELK) and K117. Residues 431–433 (IGS) and E484 contribute to the L-homocysteine site. Residues 431-433 (IGS) and E484 contribute to the L-methionine site. 5-methyltetrahydropteroyltri-L-glutamate contacts are provided by residues 515 to 516 (RC) and W561. L-homocysteine is bound at residue D599. Position 599 (D599) interacts with L-methionine. A 5-methyltetrahydropteroyltri-L-glutamate-binding site is contributed by E605. 3 residues coordinate Zn(2+): H641, C643, and E665. H694 acts as the Proton donor in catalysis. Position 726 (C726) interacts with Zn(2+).

The protein belongs to the vitamin-B12 independent methionine synthase family. Requires Zn(2+) as cofactor.

The enzyme catalyses 5-methyltetrahydropteroyltri-L-glutamate + L-homocysteine = tetrahydropteroyltri-L-glutamate + L-methionine. Its pathway is amino-acid biosynthesis; L-methionine biosynthesis via de novo pathway; L-methionine from L-homocysteine (MetE route): step 1/1. Catalyzes the transfer of a methyl group from 5-methyltetrahydrofolate to homocysteine resulting in methionine formation. The sequence is that of 5-methyltetrahydropteroyltriglutamate--homocysteine methyltransferase from Shigella flexneri serotype 5b (strain 8401).